Consider the following 171-residue polypeptide: Co-chaperone protein HscB (171 aa).

Residues 2 to 74 (DYFTLFGLPA…LTRAEYLLSL (73 aa)) enclose the J domain.

It belongs to the HscB family. Interacts with HscA and stimulates its ATPase activity. Interacts with IscU.

Co-chaperone involved in the maturation of iron-sulfur cluster-containing proteins. Seems to help targeting proteins to be folded toward HscA. This Salmonella agona (strain SL483) protein is Co-chaperone protein HscB.